The following is a 553-amino-acid chain: Transcription factor GAMYB (553 aa).

Basic and acidic residues predominate over residues Met-1–Gln-17. The tract at residues Met-1 to Trp-45 is disordered. Gly residues predominate over residues Ser-27–Pro-38. 2 HTH myb-type domains span residues Gly-37–Leu-89 and Arg-90–Gln-144. DNA-binding regions (H-T-H motif) lie at residues Trp-65–Leu-89 and Trp-117–Ile-140. The interval Pro-464 to Pro-488 is disordered.

The protein localises to the nucleus. In terms of biological role, transcriptional activator of gibberellin-dependent alpha-amylase expression in aleurone cells. Involved in pollen and floral organs development. May bind to the 5'-TAACAAA-3' box of alpha-amylase promoter. This chain is Transcription factor GAMYB (GAM1), found in Oryza sativa subsp. indica (Rice).